The sequence spans 1296 residues: DNA-directed RNA polymerase subunit beta' (1296 aa).

Positions 60, 62, 75, and 78 each coordinate Zn(2+). Mg(2+) is bound by residues aspartate 535, aspartate 537, and aspartate 539. Cysteine 877, cysteine 954, cysteine 961, and cysteine 964 together coordinate Zn(2+).

The protein belongs to the RNA polymerase beta' chain family. The RNAP catalytic core consists of 2 alpha, 1 beta, 1 beta' and 1 omega subunit. When a sigma factor is associated with the core the holoenzyme is formed, which can initiate transcription. Mg(2+) serves as cofactor. The cofactor is Zn(2+).

The catalysed reaction is RNA(n) + a ribonucleoside 5'-triphosphate = RNA(n+1) + diphosphate. In terms of biological role, DNA-dependent RNA polymerase catalyzes the transcription of DNA into RNA using the four ribonucleoside triphosphates as substrates. The protein is DNA-directed RNA polymerase subunit beta' of Beutenbergia cavernae (strain ATCC BAA-8 / DSM 12333 / CCUG 43141 / JCM 11478 / NBRC 16432 / NCIMB 13614 / HKI 0122).